The sequence spans 412 residues: FAD-dependent monooxygenase nscC (412 aa).

The N-terminal stretch at 1–21 (MGKQQETILIIGAGIAGLTTS) is a signal peptide. The FAD site is built by Glu35 and Ala46. A glycan (N-linked (GlcNAc...) asparagine) is linked at Asn92. Position 119 (Arg119) interacts with FAD. N-linked (GlcNAc...) asparagine glycans are attached at residues Asn170 and Asn231. Residues Asp326 and Gly339 each coordinate FAD.

The protein belongs to the paxM FAD-dependent monooxygenase family. The cofactor is FAD.

It functions in the pathway secondary metabolite biosynthesis. Its function is as follows. FAD-dependent monooxygenase; part of the gene cluster that mediates the biosynthesis of neosartoricin B, a prenylated anthracenone that probably exhibits T-cell antiproliferative activity, suggestive of a physiological role as an immunosuppressive agent. The non-reducing polyketide synthase nscA probably synthesizes and cyclizes the decaketide backbone. The hydrolase nscB then mediates the product release through hydrolysis followed by spontaneous decarboxylation. The prenyltransferase nscD catalyzes the addition of the dimethylallyl group to the aromatic C5. The FAD-dependent monooxygenase nscC is then responsible for the stereospecific hydroxylation at C2. Neosartoricin B can be converted into two additional compounds neosartoricins C and D. Neosartoricin C is a spirocyclic compound that is cyclized through the attack of C3 hydroxyl on C14, followed by dehydration. On the other hand, neosartoricin D is a further cyclized compound in which attack of C2 on C14 in neosartoricin C results in the formation of the acetal-containing dioxabicyclo-octanone ring. Both of these compounds are novel and possibly represent related metabolites of the gene cluster. This chain is FAD-dependent monooxygenase nscC, found in Trichophyton verrucosum (strain HKI 0517).